The chain runs to 189 residues: Elongation factor P (189 aa).

N6-(3,6-diaminohexanoyl)-5-hydroxylysine is present on lysine 34.

Belongs to the elongation factor P family. Post-translationally, may be beta-lysylated on the epsilon-amino group of Lys-34 by the combined action of EpmA and EpmB, and then hydroxylated on the C5 position of the same residue by EpmC (if this protein is present). Lysylation is critical for the stimulatory effect of EF-P on peptide-bond formation. The lysylation moiety may extend toward the peptidyltransferase center and stabilize the terminal 3-CCA end of the tRNA. Hydroxylation of the C5 position on Lys-34 may allow additional potential stabilizing hydrogen-bond interactions with the P-tRNA.

It is found in the cytoplasm. Its pathway is protein biosynthesis; polypeptide chain elongation. In terms of biological role, involved in peptide bond synthesis. Alleviates ribosome stalling that occurs when 3 or more consecutive Pro residues or the sequence PPG is present in a protein, possibly by augmenting the peptidyl transferase activity of the ribosome. Modification of Lys-34 is required for alleviation. The sequence is that of Elongation factor P from Dichelobacter nodosus (strain VCS1703A).